The following is a 1255-amino-acid chain: Bifunctional autolysin (1255 aa).

Positions 1–36 are cleaved as a signal peptide; sequence MLGVINRMAKKFNYKLPSMVALTLVGSAVTAHQVQA. Disordered regions lie at residues 110–141 and 193–218; these read GDTR…NTNV and VTTF…KYKP. An N-acetylmuramoyl-L-alanine amidase region spans residues 199 to 775; that stretch reads SAQPRSVAAT…VAQPKTAVKA (577 aa). GW domains are found at residues 442 to 516, 518 to 592, 611 to 685, 687 to 761, 783 to 858, 860 to 935, and 942 to 1016; these read TVAA…YNTA, SPVN…DTAK, TVSS…YNNA, SPVN…VPAA, TTQT…VQNL, KEVK…APTA, and AAKD…KELI. The interval 776 to 1255 is endo-beta-N-acetylglucosaminidase; sequence YTVTKPQTTQ…GKYFDIPQYK (480 aa).

It in the N-terminal section; belongs to the N-acetylmuramoyl-L-alanine amidase 2 family. In the C-terminal section; belongs to the glycosyl hydrolase 73 family. As to quaternary structure, oligomer; forms a ring structure at the cell surface which is important for efficient partitioning of daughter cells after cell division. Undergoes proteolytic processing to generate the two extracellular lytic enzymes, probably at the septal region on the cell surface.

The protein resides in the secreted. It carries out the reaction Hydrolyzes the link between N-acetylmuramoyl residues and L-amino acid residues in certain cell-wall glycopeptides.. The catalysed reaction is an N(4)-(oligosaccharide-(1-&gt;3)-[oligosaccharide-(1-&gt;6)]-beta-D-Man-(1-&gt;4)-beta-D-GlcNAc-(1-&gt;4)-alpha-D-GlcNAc)-L-asparaginyl-[protein] + H2O = an oligosaccharide-(1-&gt;3)-[oligosaccharide-(1-&gt;6)]-beta-D-Man-(1-&gt;4)-D-GlcNAc + N(4)-(N-acetyl-beta-D-glucosaminyl)-L-asparaginyl-[protein]. In terms of biological role, endohydrolysis of the di-N-acetylchitobiosyl unit in high-mannose glycopeptides and glycoproteins containing the -[(Man)5(GlcNAc)2]-Asn structure. One N-acetyl-D-glucosamine residue remains attached to the protein; the rest of the oligosaccharide is released intact. Cleaves the peptidoglycan connecting the daughter cells at the end of the cell division cycle, resulting in the separation of the two newly divided cells. Acts as an autolysin in penicillin-induced lysis. The polypeptide is Bifunctional autolysin (atl) (Staphylococcus aureus (strain Mu3 / ATCC 700698)).